The following is a 259-amino-acid chain: UDP-2,3-diacylglucosamine hydrolase (259 aa).

Positions 8, 10, 41, 79, and 114 each coordinate Mn(2+). Substrate is bound at residue 79–80; the sequence is NR. Substrate is bound by residues Asp-122, Ser-160, Asn-164, Lys-167, and His-195. The Mn(2+) site is built by His-195 and His-197.

This sequence belongs to the LpxH family. It depends on Mn(2+) as a cofactor.

It is found in the cell inner membrane. It carries out the reaction UDP-2-N,3-O-bis[(3R)-3-hydroxytetradecanoyl]-alpha-D-glucosamine + H2O = 2-N,3-O-bis[(3R)-3-hydroxytetradecanoyl]-alpha-D-glucosaminyl 1-phosphate + UMP + 2 H(+). Its pathway is glycolipid biosynthesis; lipid IV(A) biosynthesis; lipid IV(A) from (3R)-3-hydroxytetradecanoyl-[acyl-carrier-protein] and UDP-N-acetyl-alpha-D-glucosamine: step 4/6. Its function is as follows. Hydrolyzes the pyrophosphate bond of UDP-2,3-diacylglucosamine to yield 2,3-diacylglucosamine 1-phosphate (lipid X) and UMP by catalyzing the attack of water at the alpha-P atom. Involved in the biosynthesis of lipid A, a phosphorylated glycolipid that anchors the lipopolysaccharide to the outer membrane of the cell. This is UDP-2,3-diacylglucosamine hydrolase from Edwardsiella ictaluri (strain 93-146).